The following is a 185-amino-acid chain: UPF0149 protein PFL_5969 (185 aa).

This sequence belongs to the UPF0149 family.

The polypeptide is UPF0149 protein PFL_5969 (Pseudomonas fluorescens (strain ATCC BAA-477 / NRRL B-23932 / Pf-5)).